Reading from the N-terminus, the 263-residue chain is Uroplakin-3b-like protein 1 (263 aa).

A signal peptide spans 1–33 (MDNSWRLGPAIGLSAGQSQLLVSLLLLLTRVQP). Topologically, residues 34-204 (GTDVAAPEHI…PGPQSPGTVV (171 aa)) are extracellular. Residues Asn51, Asn76, and Asn91 are each glycosylated (N-linked (GlcNAc...) asparagine). A helical transmembrane segment spans residues 205–225 (IIAILSILLAVLLTVLLAVLI). Over 226 to 263 (YTCFNSCRSTSLSGPEEAGSVRRYTTHLAFSTPAEGAS) the chain is Cytoplasmic.

This sequence belongs to the uroplakin-3 family.

The protein localises to the membrane. The sequence is that of Uroplakin-3b-like protein 1 from Homo sapiens (Human).